We begin with the raw amino-acid sequence, 1043 residues long: MLKFIEKIFGSKHDRDIKRLWPIVDEINEHFESYKSLSDEALRGKTQELKEQIKEHISDIEQSIITEKKQLENLELTIEEAESIQEKIEGIEKELHDATEEALNEVLPEAFAIVKETARRLVGKEYPVMGSTNIWNMVPYDVQLIGGIVLHQGKISEMATGEGKTLVAVLPTFLNALTGKGVHIVTVNDYLAQRDKEWMTPIFEFHGLTVGAILGNMPPYQRKEQYACDITYGTNNEFGFDYLRDNMAGDPEDVVQREFNYAIIDEVDSVLIDEARTPLIISGPVPNADVNKYNEIKPRVERLVRAQQNLVAKILTETEKAIKTPNKADKDAEFNIGLGLLRAKRGQPKNNKFIKLIGEPNAARFMQTVENEFLKDNARRMHEVDEELYFSIDEKNHTIELTEKGREFMTDTHEDPDFFVLPDVGTEISKIDSDATLSEQDKVQKKDELYRLFSVRSERIHNVSQLLRAFSLYTRDDEYVVQDGKVLIVDEFTGRILPGRRYSDGLHQALEAKEGVKIEGETQTMATITLQNFFRLYKKLAGMTGTAETEASEFFEIYKLDVVVIPTNKPIVRKDQEDLIFKTKREKYNAVINKIQELQEKGQPVLVGTTSVDVSETLSRMLKMKHIEHNVLNAKQHAREADVVANAGHKRAVTIATNMAGRGTDIKLGEGITEVGGLFILGTERHESRRIDRQLRGRAGRQGDPGTSVFYVSLEDDLMRLFGSDRVISVMDKLGHQEGDVIEHSMVTKSIERAQRRVEEQNFAIRKRLLEYDNVMNQQREVIYTRRRKALEKRRLRIEIFDLLRDYADKHAEKFYQALDKDGLEEQVLRELSVDIKLTVDAFEKLGEDGIADKIYNTAVDFYKRKEELLGNDIMAQIEKYSVLGVIDQKWREHLRDIDDLKEGINLRAYGQKDPLLEYKQEAFKLFVDLLEEISTETLSFAFKLFPQQAAERATFIPERSRVRQERLVAQHEVAQSAYATAAPAAETTTTAKAADAARQQPPAAENEEQKRQPVHVEKTPGRNDPCPCGSGKKYKHCHGRNA.

ATP is bound by residues Gln143, 161–165, and Asp665; that span reads GEGKT. Residues 980–1005 show a composition bias toward low complexity; it reads ATAAPAAETTTTAKAADAARQQPPAA. A disordered region spans residues 980–1043; sequence ATAAPAAETT…KYKHCHGRNA (64 aa). A compositionally biased stretch (basic and acidic residues) spans 1008–1022; that stretch reads EEQKRQPVHVEKTPG. Residues Cys1027, Cys1029, Cys1038, and His1039 each contribute to the Zn(2+) site. Residues 1033-1043 are compositionally biased toward basic residues; that stretch reads KKYKHCHGRNA.

This sequence belongs to the SecA family. As to quaternary structure, monomer and homodimer. Part of the essential Sec protein translocation apparatus which comprises SecA, SecYEG and auxiliary proteins SecDF. Other proteins may also be involved. Zn(2+) is required as a cofactor.

Its subcellular location is the cell inner membrane. It is found in the cytoplasm. The catalysed reaction is ATP + H2O + cellular proteinSide 1 = ADP + phosphate + cellular proteinSide 2.. In terms of biological role, part of the Sec protein translocase complex. Interacts with the SecYEG preprotein conducting channel. Has a central role in coupling the hydrolysis of ATP to the transfer of proteins into and across the cell membrane, serving as an ATP-driven molecular motor driving the stepwise translocation of polypeptide chains across the membrane. In Chloroherpeton thalassium (strain ATCC 35110 / GB-78), this protein is Protein translocase subunit SecA.